Reading from the N-terminus, the 58-residue chain is Putative transcript Y 13 protein (58 aa).

A helical membrane pass occupies residues 17-37; that stretch reads LLGWDLNLSLFLGLCLMLLLA.

The protein resides in the membrane. In Homo sapiens (Human), this protein is Putative transcript Y 13 protein (TTTY13).